The primary structure comprises 102 residues: Large ribosomal subunit protein bL21 (102 aa).

It belongs to the bacterial ribosomal protein bL21 family. Part of the 50S ribosomal subunit. Contacts protein L20.

This protein binds to 23S rRNA in the presence of protein L20. This chain is Large ribosomal subunit protein bL21, found in Nitratidesulfovibrio vulgaris (strain ATCC 29579 / DSM 644 / CCUG 34227 / NCIMB 8303 / VKM B-1760 / Hildenborough) (Desulfovibrio vulgaris).